Reading from the N-terminus, the 416-residue chain is Probable tRNA pseudouridine synthase D (416 aa).

Catalysis depends on D83, which acts as the Nucleophile. A TRUD domain is found at 158 to 379 (GFPNYFGYQR…PGGRRELLIR (222 aa)).

Belongs to the pseudouridine synthase TruD family.

It carries out the reaction uridine(13) in tRNA = pseudouridine(13) in tRNA. In terms of biological role, could be responsible for synthesis of pseudouridine from uracil-13 in transfer RNAs. This Thermococcus onnurineus (strain NA1) protein is Probable tRNA pseudouridine synthase D.